Reading from the N-terminus, the 843-residue chain is KN motif and ankyrin repeat domain-containing protein 2 (843 aa).

The disordered stretch occupies residues 1–31 (MAQVLHVPAPFPGTPGQASPAAFPSKEPDPP). Positions 1–72 (MAQVLHVPAP…AVQRRPRLGS (72 aa)) are interaction with AIFM1. S19, S83, S86, S89, and S92 each carry phosphoserine. At R105 the chain carries Omega-N-methylarginine. Residues 161–182 (LAGVGLLPPTPRSSGLSTPVAP) form a disordered region. The residue at position 170 (T170) is a Phosphothreonine. 2 coiled-coil regions span residues 183–234 (SAGH…QLKS) and 282–313 (DGEAALVAKVAVLETQLKKALQELRAAQTQQV). T331 is subject to Phosphothreonine. A Phosphoserine modification is found at S358. Residues 410–577 (TERSCTGAPR…VASGPDPEEE (168 aa)) are disordered. The segment covering 457–470 (AAASQDSQAADGAG) has biased composition (low complexity). S532 bears the Phosphoserine mark. The segment covering 547–561 (ATTSLEGPQLSQESQ) has biased composition (polar residues). Residues 606 to 643 (RELKVAYTTVLQEWLRLACRSDAHPELVRRHLVTFRAM) form an ANK 0; degenerate repeat. Positions 661 to 827 (TALHYSVSHA…YSRMNIKCSF (167 aa)) are interaction with NCOA1. ANK repeat units lie at residues 673 to 703 (PVVRQLLDSGVCHVDKLNRAGYSPIMLTALA), 707 to 740 (TQDDIETILQLFRLGNVNAKASQAGQTALMLAVS), 745 to 774 (DVVRALLACEADVNIQDEDGSTALMCACEH), 778 to 808 (EITGLLLAVPSCDISLTDRDGSTALMVALDA), and 812 to 842 (EIASMLYSRMNIKCSFAPMSDYESPASSSAE).

In terms of assembly, interacts (non-phosphorylated form) with NCOA1; NCOA2 AND NCOA3. Interacts with AIFM1. Interacts with ARHGDIA; the interaction is direct and may regulate the interaction of ARHGDIA with RHOA, RAC1 and CDC42. Interacts (via ANK repeats 1-5) with KIF21A (via residues 1148-1169). Phosphorylated by casein kinase II upon estrogen stimulation. Phosphorylation induces the release by KANK2 of NCOA1 and its translocation to the nucleus where NCOA1 can activate gene transcription. In terms of tissue distribution, widely expressed with highest levels in liver and skeletal muscle.

Its subcellular location is the cytoplasm. The protein resides in the mitochondrion. Involved in transcription regulation by sequestering in the cytoplasm nuclear receptor coactivators such as NCOA1, NCOA2 and NCOA3. Involved in regulation of caspase-independent apoptosis by sequestering the proapoptotic factor AIFM1 in mitochondria. Pro-apoptotic stimuli can induce its proteasomal degradation allowing the translocation of AIFM1 to the nucleus to induce apoptosis. Involved in the negative control of vitamin D receptor signaling pathway. Involved in actin stress fibers formation through its interaction with ARHGDIA and the regulation of the Rho signaling pathway. May thereby play a role in cell adhesion and migration, regulating for instance podocytes migration during development of the kidney. Through the Rho signaling pathway may also regulate cell proliferation. The sequence is that of KN motif and ankyrin repeat domain-containing protein 2 (Kank2) from Mus musculus (Mouse).